The primary structure comprises 536 residues: MHLQRNFFILIFFFISFLLWKTWQQKEFSSDVHKIINKYENVNLVNNNINKLASNIIIKTDVLKIQVNLYGGDIEKAELLHFKSKLNSSQSLVLLDTNENFVYQAQCGITGKDGADNLQKHIRPLYIAKRKYYELSRHNKKIEVPLQWISKDGIIYKKIFVLKSGEYDVSVKYKINNITNKHLKVSMFGQLKQTINLPEDKNTYTNNFALQTFRGAAYSSDNDKYVKYSFDSIVNKEKKNIVVTHSGWVAMLQKYFATSWIPDNSYLNTMYIGSSGDNLAEIGYYSRPIDIFPHSTISLSSKLWIGPEIQNKMAVIASNLDLTVDYGWLWFLSQPLFKLLNFLYNICGNWGVSIILITFIIKGITFPLTKSQFKTMAKIRKLQPKINYIKKKFKNNNQKISEEIMSLYKTEKVNPLGGCFPLFIQMPIFLALYYMLISSVELRHAPFFLWIHDLSDQDPFYVLPILMGVTMFFIQRVTPSNVTDPVQKKIMNYIPILFTVFFLWFPSGLVLYYLISNLVTIIQQKIIIKALNKTLK.

Transmembrane regions (helical) follow at residues 3–23, 346–366, 417–437, 454–474, and 494–514; these read LQRN…WKTW, ICGN…GITF, GGCF…YMLI, LSDQ…MFFI, and IPIL…LYYL.

The protein belongs to the OXA1/ALB3/YidC family. Type 1 subfamily. In terms of assembly, interacts with the Sec translocase complex via SecD. Specifically interacts with transmembrane segments of nascent integral membrane proteins during membrane integration.

It localises to the cell membrane. Required for the insertion and/or proper folding and/or complex formation of integral membrane proteins into the membrane. Involved in integration of membrane proteins that insert both dependently and independently of the Sec translocase complex, as well as at least some lipoproteins. Aids folding of multispanning membrane proteins. The polypeptide is Membrane protein insertase YidC (Buchnera aphidicola subsp. Baizongia pistaciae (strain Bp)).